The sequence spans 184 residues: NEDD8-conjugating enzyme Ubc12 (184 aa).

In terms of domain architecture, UBC core spans 30 to 175; sequence AGELRLHKDI…VRRAMTGGYV (146 aa). Cys113 functions as the Glycyl thioester intermediate in the catalytic mechanism.

It belongs to the ubiquitin-conjugating enzyme family. UBC12 subfamily. In terms of assembly, interacts with RBX1. Expressed in shoot, root and floral meristems, and in vascular tissues of leaves.

It participates in protein modification; protein neddylation. Its function is as follows. Accepts the ubiquitin-like protein NEDD8/RUB1 from the ECR1-AXR1 E1 complex and catalyzes its covalent attachment to other proteins. The sequence is that of NEDD8-conjugating enzyme Ubc12 (RCE1) from Arabidopsis thaliana (Mouse-ear cress).